Here is a 1227-residue protein sequence, read N- to C-terminus: Peroxisomal ATPase PEX1 (1227 aa).

Disordered regions lie at residues 251-311 and 443-480; these read NNKN…NKKN and PPTS…TNNM. Acidic residues predominate over residues 264-289; that stretch reads GDEEEDDDDNEEFDDDDDDDNNNNED. Coiled-coil stretches lie at residues 282 to 315 and 454 to 519; these read DDNN…NKTI and NNLD…NQFQ. Residues 290 to 299 show a composition bias toward basic and acidic residues; it reads DTSKLQKQLD. ATP is bound by residues 609-616 and 907-914; these read GSHGSGKS and GPTGCGKT. Over residues 1096–1107 the composition is skewed to basic and acidic residues; the sequence is KKRKRKEKEDQS. The tract at residues 1096 to 1132 is disordered; the sequence is KKRKRKEKEDQSNKNSSQQQDDFIIFQPKNNDNSISK. The segment covering 1108–1117 has biased composition (low complexity); it reads NKNSSQQQDD. The segment covering 1123 to 1132 has biased composition (polar residues); that stretch reads PKNNDNSISK.

The protein belongs to the AAA ATPase family. Interacts with PEX6; forming the PEX1-PEX6 AAA ATPase complex, which is composed of a heterohexamer formed by a trimer of PEX1-PEX6 dimers.

It is found in the cytoplasm. The protein localises to the cytosol. It localises to the peroxisome membrane. It catalyses the reaction ATP + H2O = ADP + phosphate + H(+). Its function is as follows. Component of the PEX1-PEX6 AAA ATPase complex, a protein dislocase complex that mediates the ATP-dependent extraction of the PEX5 receptor from peroxisomal membranes, an essential step for PEX5 recycling. Specifically recognizes PEX5 monoubiquitinated at 'Cys-11', and pulls it out of the peroxisome lumen through the PEX2-PEX10-PEX12 retrotranslocation channel. Extraction by the PEX1-PEX6 AAA ATPase complex is accompanied by unfolding of the TPR repeats and release of bound cargo from PEX5. The sequence is that of Peroxisomal ATPase PEX1 (pex1) from Dictyostelium discoideum (Social amoeba).